Consider the following 219-residue polypeptide: Ribose-5-phosphate isomerase A (219 aa).

Substrate is bound by residues 28–31 (TGST), 81–84 (DGAD), and 94–97 (KGGG). Glutamate 103 functions as the Proton acceptor in the catalytic mechanism. Residue lysine 121 coordinates substrate.

This sequence belongs to the ribose 5-phosphate isomerase family. In terms of assembly, homodimer.

It carries out the reaction aldehydo-D-ribose 5-phosphate = D-ribulose 5-phosphate. Its pathway is carbohydrate degradation; pentose phosphate pathway; D-ribose 5-phosphate from D-ribulose 5-phosphate (non-oxidative stage): step 1/1. Its function is as follows. Catalyzes the reversible conversion of ribose-5-phosphate to ribulose 5-phosphate. This is Ribose-5-phosphate isomerase A from Shewanella sp. (strain MR-4).